We begin with the raw amino-acid sequence, 430 residues long: DD-carboxypeptidase/endopeptidase Mpg (430 aa).

Residues His-295, Asp-299, and His-375 each coordinate Zn(2+).

The protein belongs to the peptidase M23B family. As to quaternary structure, monomer. Requires Zn(2+) as cofactor. Likely to be synthesized as a proenzyme. The cleavage of the N-terminal domain is probably required for the activation of the enzyme.

The protein resides in the cell outer membrane. In terms of biological role, has both endopeptidase and DD-carboxypeptidase activities. Degrades cell wall peptidoglycan (PG) to allow consummate expression of pili. This chain is DD-carboxypeptidase/endopeptidase Mpg, found in Neisseria meningitidis serogroup B (strain ATCC 13091 / M2091).